A 314-amino-acid chain; its full sequence is Homoserine kinase (314 aa).

95 to 105 lines the ATP pocket; sequence PHSRGLGSSAS.

Belongs to the GHMP kinase family. Homoserine kinase subfamily.

It localises to the cytoplasm. The enzyme catalyses L-homoserine + ATP = O-phospho-L-homoserine + ADP + H(+). The protein operates within amino-acid biosynthesis; L-threonine biosynthesis; L-threonine from L-aspartate: step 4/5. Functionally, catalyzes the ATP-dependent phosphorylation of L-homoserine to L-homoserine phosphate. The protein is Homoserine kinase of Rhodococcus opacus (strain B4).